The chain runs to 228 residues: Ribonuclease HII (228 aa).

In terms of domain architecture, RNase H type-2 spans 26-214; it reads RAVAGVDEVG…VRAHSRFPLD (189 aa). Residues D32, E33, and D124 each contribute to the a divalent metal cation site.

The protein belongs to the RNase HII family. It depends on Mn(2+) as a cofactor. Mg(2+) is required as a cofactor.

It is found in the cytoplasm. The catalysed reaction is Endonucleolytic cleavage to 5'-phosphomonoester.. Functionally, endonuclease that specifically degrades the RNA of RNA-DNA hybrids. The sequence is that of Ribonuclease HII from Solibacter usitatus (strain Ellin6076).